A 366-amino-acid polypeptide reads, in one-letter code: Galactoside alpha-(1,2)-fucosyltransferase 1 (366 aa).

Residues 1 to 8 (MWPRSHRH) are Cytoplasmic-facing. A helical; Signal-anchor for type II membrane protein membrane pass occupies residues 9 to 25 (LCLAFLLVCVLSAISFL). Residues 26–366 (IHFHQDSIRH…LSPLWPLAEP (341 aa)) are Lumenal-facing. Asn66, Asn302, and Asn328 each carry an N-linked (GlcNAc...) asparagine glycan.

This sequence belongs to the glycosyltransferase 11 family.

It is found in the golgi apparatus. Its subcellular location is the golgi stack membrane. It carries out the reaction a beta-D-galactosyl-(1-&gt;4)-N-acetyl-beta-D-glucosaminyl derivative + GDP-beta-L-fucose = an alpha-L-Fuc-(1-&gt;2)-beta-D-Gal-(1-&gt;4)-beta-D-GlcNAc derivative + GDP + H(+). It catalyses the reaction a ganglioside GA1 + GDP-beta-L-fucose = a ganglioside Fuc-GA1 + GDP + H(+). The enzyme catalyses a beta-D-Gal-(1-&gt;3)-beta-D-GlcNAc-(1-&gt;3)-beta-D-Gal-(1-&gt;4)-beta-D-Glc-(1&lt;-&gt;1')-Cer(d18:1(4E)) + GDP-beta-L-fucose = alpha-L-fucosyl-(1-&gt;2)- beta-D-galactosyl-(1-&gt;3)-N-acetyl-beta-D-glucosaminyl-(1-&gt;3)-beta-D-galactosyl-(1-&gt;4)-beta-D-glucosyl-(1&lt;-&gt;1')-N-acylsphing-4-enine + GDP + H(+). The catalysed reaction is a neolactoside nLc4Cer(d18:1(4E)) + GDP-beta-L-fucose = a neolactoside IV(2)-alpha-Fuc-nLc4Cer(d18:1(4E)) + GDP + H(+). It carries out the reaction a ganglioside GM1 + GDP-beta-L-fucose = a ganglioside Fuc-GM1 + GDP + H(+). It catalyses the reaction beta-D-galactosyl-(1-&gt;3)-N-acetyl-D-galactosamine + GDP-beta-L-fucose = alpha-L-fucosyl-(1-&gt;2)-beta-D-galactosyl-(1-&gt;3)-N-acetyl-D-galactosamine + GDP + H(+). It functions in the pathway protein modification; protein glycosylation. Functionally, catalyzes the transfer of L-fucose, from a guanosine diphosphate-beta-L-fucose, to the terminal galactose residue of glycoconjugates through an alpha(1,2) linkage leading to H antigen synthesis that is an intermediate substrate in the synthesis of ABO blood group antigens. H antigen is essential for maturation of the glomerular layer of the main olfactory bulb, in cell migration and early cell-cell contacts during tumor associated angiogenesis. Preferentially fucosylates soluble lactose and to a lesser extent fucosylates glycolipids gangliosides GA1 and GM1a. The chain is Galactoside alpha-(1,2)-fucosyltransferase 1 from Saimiri sciureus (Common squirrel monkey).